We begin with the raw amino-acid sequence, 283 residues long: Formamidopyrimidine-DNA glycosylase (283 aa).

Proline 2 serves as the catalytic Schiff-base intermediate with DNA. Glutamate 3 functions as the Proton donor in the catalytic mechanism. Lysine 58 serves as the catalytic Proton donor; for beta-elimination activity. DNA-binding residues include histidine 100, arginine 119, and arginine 162. The segment at 247–283 adopts an FPG-type zinc-finger fold; the sequence is DVYGREGEPCRRAGCTGTVTRITQSGRSSFYCGKCQR. Arginine 273 acts as the Proton donor; for delta-elimination activity in catalysis.

This sequence belongs to the FPG family. In terms of assembly, monomer. Zn(2+) is required as a cofactor.

It catalyses the reaction Hydrolysis of DNA containing ring-opened 7-methylguanine residues, releasing 2,6-diamino-4-hydroxy-5-(N-methyl)formamidopyrimidine.. The enzyme catalyses 2'-deoxyribonucleotide-(2'-deoxyribose 5'-phosphate)-2'-deoxyribonucleotide-DNA = a 3'-end 2'-deoxyribonucleotide-(2,3-dehydro-2,3-deoxyribose 5'-phosphate)-DNA + a 5'-end 5'-phospho-2'-deoxyribonucleoside-DNA + H(+). Its function is as follows. Involved in base excision repair of DNA damaged by oxidation or by mutagenic agents. Acts as a DNA glycosylase that recognizes and removes damaged bases. Has a preference for oxidized purines, such as 7,8-dihydro-8-oxoguanine (8-oxoG). Has AP (apurinic/apyrimidinic) lyase activity and introduces nicks in the DNA strand. Cleaves the DNA backbone by beta-delta elimination to generate a single-strand break at the site of the removed base with both 3'- and 5'-phosphates. This chain is Formamidopyrimidine-DNA glycosylase, found in Ruegeria sp. (strain TM1040) (Silicibacter sp.).